The sequence spans 1770 residues: Transposon Ty2-OR1 Gag-Pol polyprotein (1770 aa).

Polar residues-rich tracts occupy residues 1–39 and 49–60; these read MESQ…SASN and KVNSQQETTPGT. Disordered regions lie at residues 1 to 88 and 359 to 449; these read MESQ…YQQH and QHSE…SNDE. The segment at 295–397 is RNA-binding; sequence ENNINVSDRL…SSKPRAAKAH (103 aa). Residues 369-381 show a composition bias toward low complexity; that stretch reads TSPNTTNTKVTTR. 2 stretches are compositionally biased toward polar residues: residues 399 to 408 and 415 to 435; these read IATSSKFSRV and ESTV…GQQQ. Asp-457 serves as the catalytic For protease activity; shared with dimeric partner. The integrase-type zinc finger-like stretch occupies residues 579 to 636; sequence NVNKSKSVNKYPYPLIHRMLGHANFRSIQKSLKKNAVTYLKESDIEWSNASTYQCPDC. One can recognise an Integrase catalytic domain in the interval 656–831; it reads ESYEPFQYLH…AGLDITTILP (176 aa). Residues Asp-667 and Asp-732 each coordinate Mg(2+). Polar residues-rich tracts occupy residues 916–929, 1009–1024, and 1065–1082; these read FIEQ…YDQN, ESDT…FTAR, and QRNS…STPS. 3 disordered regions span residues 916–935, 1005–1038, and 1057–1205; these read FIEQ…SDHD, GGTI…MIDL, and GGTE…TEIE. The short motif at 1193 to 1227 is the Bipartite nuclear localization signal element; the sequence is KKRSLEDNETEIEVSRDTWNNKNMRSLEPPRSKKR. In terms of domain architecture, Reverse transcriptase Ty1/copia-type spans 1353 to 1491; the sequence is NDYYITQLDI…DILGLEIKYQ (139 aa). 6 residues coordinate Mg(2+): Asp-1361, Asp-1442, Asp-1443, Asp-1625, Glu-1667, and Asp-1700. One can recognise an RNase H Ty1/copia-type domain in the interval 1625–1767; that stretch reads DASYGNQPYY…IKTFKLLTNK (143 aa).

As to quaternary structure, the capsid protein forms a homotrimer, from which the VLPs are assembled. The protease is a homodimer, whose active site consists of two apposed aspartic acid residues. Post-translationally, initially, virus-like particles (VLPs) are composed of the structural unprocessed proteins Gag and Gag-Pol, and also contain the host initiator methionine tRNA (tRNA(i)-Met) which serves as a primer for minus-strand DNA synthesis, and a dimer of genomic Ty RNA. Processing of the polyproteins occurs within the particle and proceeds by an ordered pathway, called maturation. First, the protease (PR) is released by autocatalytic cleavage of the Gag-Pol polyprotein, and this cleavage is a prerequisite for subsequent processing at the remaining sites to release the mature structural and catalytic proteins. Maturation takes place prior to the RT reaction and is required to produce transposition-competent VLPs.

The protein localises to the cytoplasm. The protein resides in the nucleus. It catalyses the reaction DNA(n) + a 2'-deoxyribonucleoside 5'-triphosphate = DNA(n+1) + diphosphate. The catalysed reaction is Endonucleolytic cleavage to 5'-phosphomonoester.. Its function is as follows. Capsid protein (CA) is the structural component of the virus-like particle (VLP), forming the shell that encapsulates the retrotransposons dimeric RNA genome. The particles are assembled from trimer-clustered units and there are holes in the capsid shells that allow for the diffusion of macromolecules. CA also has nucleocapsid-like chaperone activity, promoting primer tRNA(i)-Met annealing to the multipartite primer-binding site (PBS), dimerization of Ty2 RNA and initiation of reverse transcription. In terms of biological role, the aspartyl protease (PR) mediates the proteolytic cleavages of the Gag and Gag-Pol polyproteins after assembly of the VLP. Functionally, reverse transcriptase/ribonuclease H (RT) is a multifunctional enzyme that catalyzes the conversion of the retro-elements RNA genome into dsDNA within the VLP. The enzyme displays a DNA polymerase activity that can copy either DNA or RNA templates, and a ribonuclease H (RNase H) activity that cleaves the RNA strand of RNA-DNA heteroduplexes during plus-strand synthesis and hydrolyzes RNA primers. The conversion leads to a linear dsDNA copy of the retrotransposon that includes long terminal repeats (LTRs) at both ends. Integrase (IN) targets the VLP to the nucleus, where a subparticle preintegration complex (PIC) containing at least integrase and the newly synthesized dsDNA copy of the retrotransposon must transit the nuclear membrane. Once in the nucleus, integrase performs the integration of the dsDNA into the host genome. The sequence is that of Transposon Ty2-OR1 Gag-Pol polyprotein (TY2B-OR1) from Saccharomyces cerevisiae (strain ATCC 204508 / S288c) (Baker's yeast).